The following is a 210-amino-acid chain: Thymidylate kinase (210 aa).

Asp-17 contributes to the dGMP binding site. Asp-17 contacts dTMP. ATP is bound by residues Arg-18, Ser-19, Gly-20, Lys-21, Ser-22, and Thr-23. DTMP-binding residues include Arg-47, Phe-74, Arg-78, Arg-99, and Tyr-107. Residues Phe-74, Arg-78, Arg-99, Tyr-107, Ser-108, and Tyr-153 each contribute to the dGMP site. The tract at residues 143-155 (QNRSDYGEEIYEK) is LID. An ATP-binding site is contributed by Arg-182.

Belongs to the thymidylate kinase family. In terms of assembly, homodimer. Binds two dTMP molecules per dimer. Binds only one dTGP molecule per dimer.

It catalyses the reaction dTMP + ATP = dTDP + ADP. It carries out the reaction dGMP + ATP = dGDP + ADP. It participates in pyrimidine metabolism; dTTP biosynthesis. Its activity is regulated as follows. Inhibited by deoxyguanosine (dG), deoxythymidine (dT) and azidothymidine (AZT). In terms of biological role, catalyzes the phosphorylation of thymidine monophosphate (dTMP) to thymidine diphosphate (dTDP), the immediate precursor for the DNA building block dTTP. Can also phosphorylate dGMP and to a lesser extent GMP, dUMP and dIMP. Can use either ATP or dATP as phosphate donors in presence of Mg(2+). The sequence is that of Thymidylate kinase from Plasmodium falciparum (isolate 3D7).